A 20-amino-acid polypeptide reads, in one-letter code: Alpha-1B-glycoprotein (20 aa).

The disordered stretch occupies residues 1–20; the sequence is AVVFDPQPALWAEADTQLEP.

As to quaternary structure, interacts with CRISP3. In terms of processing, glycosylated. In terms of tissue distribution, plasma.

The protein resides in the secreted. In Equus asinus (Donkey), this protein is Alpha-1B-glycoprotein (A1BG).